The sequence spans 501 residues: 2,3-bisphosphoglycerate-independent phosphoglycerate mutase (501 aa).

Mn(2+) is bound by residues D10 and S60. S60 acts as the Phosphoserine intermediate in catalysis. Substrate contacts are provided by residues H121, 151 to 152 (RD), R182, R188, 256 to 259 (RPDR), and K329. D394, H398, D435, H436, and H453 together coordinate Mn(2+).

This sequence belongs to the BPG-independent phosphoglycerate mutase family. Monomer. Mn(2+) serves as cofactor.

It catalyses the reaction (2R)-2-phosphoglycerate = (2R)-3-phosphoglycerate. It functions in the pathway carbohydrate degradation; glycolysis; pyruvate from D-glyceraldehyde 3-phosphate: step 3/5. Functionally, catalyzes the interconversion of 2-phosphoglycerate and 3-phosphoglycerate. The protein is 2,3-bisphosphoglycerate-independent phosphoglycerate mutase of Mycoplasmopsis synoviae (strain 53) (Mycoplasma synoviae).